We begin with the raw amino-acid sequence, 306 residues long: tRNA pseudouridine synthase B (306 aa).

The active-site Nucleophile is Asp51.

The protein belongs to the pseudouridine synthase TruB family. Type 1 subfamily.

It catalyses the reaction uridine(55) in tRNA = pseudouridine(55) in tRNA. Responsible for synthesis of pseudouridine from uracil-55 in the psi GC loop of transfer RNAs. In Nocardia farcinica (strain IFM 10152), this protein is tRNA pseudouridine synthase B.